Reading from the N-terminus, the 506-residue chain is Putative basic amino acid antiporter YfcC (506 aa).

13 consecutive transmembrane segments (helical) span residues 19–39, 107–127, 148–168, 171–191, 208–228, 231–251, 287–307, 310–330, 352–372, 398–418, 419–439, 442–462, and 485–505; these read LVIIFFVAILTSLATWVVPVG, GTAVGIIMFMLVIGGAFGIVM, ILFIPALFILFSLGGAVFGMG, AVAFAIIIAPLMVRLGYDSIT, WMNPFCVVVAQGIAGVPVLSG, LRIVVWVIATLIGLIFTMVYA, WLVLIVLTAVMVWVIWGVIVN, FIPEIASQFFTMGLVIGIIGV, MMIAPALLVGFAKGILLLVGN, AVAAWFMLLFQAVFNFFVTSG, SGQAALTMPLLAPLGDLVGVN, VTVLAFQFGDGFSHIIYPTSA, and LLGLLFIMSSVVVIGAQLMGY.

To H.influenzae HI_0594. This sequence to B.subtilis YcgA.

Its subcellular location is the cell inner membrane. Its function is as follows. Metabolomic profiling of different yfcC over-expression and deletion strains suggests that it may affect the glyoxylate shunt. The polypeptide is Putative basic amino acid antiporter YfcC (yfcC) (Escherichia coli (strain K12)).